We begin with the raw amino-acid sequence, 131 residues long: Lysosomal enzyme trafficking factor (131 aa).

Transmembrane regions (helical) follow at residues methionine 8–phenylalanine 28 and leucine 66–leucine 86.

The protein belongs to the LYSET family.

The protein localises to the golgi apparatus membrane. Required for mannose-6-phosphate-dependent trafficking of lysosomal enzymes. LYSET bridges GlcNAc-1-phosphate transferase (GNPTAB), to the membrane-bound transcription factor site-1 protease (MBTPS1), thus allowing proteolytic activation of the GNPTAB. GNPTAB is involved in the regulation of M6P-dependent Golgi-to-lysosome trafficking of lysosomal enzymes. LYSET is thus an essential factor for maturation and delivery of lysosomal hydrolases. The polypeptide is Lysosomal enzyme trafficking factor (lyset-b) (Xenopus laevis (African clawed frog)).